The chain runs to 257 residues: Thiazole synthase (257 aa).

The Schiff-base intermediate with DXP role is filled by lysine 98. Residues glycine 159, 185 to 186 (AG), and 207 to 208 (NT) each bind 1-deoxy-D-xylulose 5-phosphate.

This sequence belongs to the ThiG family. As to quaternary structure, homotetramer. Forms heterodimers with either ThiH or ThiS.

The protein resides in the cytoplasm. The enzyme catalyses [ThiS sulfur-carrier protein]-C-terminal-Gly-aminoethanethioate + 2-iminoacetate + 1-deoxy-D-xylulose 5-phosphate = [ThiS sulfur-carrier protein]-C-terminal Gly-Gly + 2-[(2R,5Z)-2-carboxy-4-methylthiazol-5(2H)-ylidene]ethyl phosphate + 2 H2O + H(+). It functions in the pathway cofactor biosynthesis; thiamine diphosphate biosynthesis. Catalyzes the rearrangement of 1-deoxy-D-xylulose 5-phosphate (DXP) to produce the thiazole phosphate moiety of thiamine. Sulfur is provided by the thiocarboxylate moiety of the carrier protein ThiS. In vitro, sulfur can be provided by H(2)S. In Anaeromyxobacter dehalogenans (strain 2CP-1 / ATCC BAA-258), this protein is Thiazole synthase.